Reading from the N-terminus, the 142-residue chain is Transcriptional regulator MraZ (142 aa).

SpoVT-AbrB domains follow at residues 5–47 (THSP…SERE) and 76–119 (ASDE…DAQA).

The protein belongs to the MraZ family. Forms oligomers.

The protein localises to the cytoplasm. It is found in the nucleoid. In Arthrobacter sp. (strain FB24), this protein is Transcriptional regulator MraZ.